We begin with the raw amino-acid sequence, 501 residues long: Cytochrome P450 71B23 (501 aa).

The helical transmembrane segment at 1-21 (MSIFLCFLLLLLLLLVTIIFT) threads the bilayer. C443 lines the heme pocket.

It belongs to the cytochrome P450 family. Requires heme as cofactor.

The protein resides in the membrane. This Arabidopsis thaliana (Mouse-ear cress) protein is Cytochrome P450 71B23 (CYP71B23).